Reading from the N-terminus, the 324-residue chain is Cytochrome c biogenesis protein CcsA (324 aa).

8 helical membrane passes run 17 to 37 (IISVVIIIQLMTFFVHEIPAL), 44 to 64 (GMIATFLSITGLLIIRWIYSG), 68 to 88 (LSNLYESLMFLSWSFAIIHMI), 99 to 119 (YLSAITIPSAIFTQAFATSGL), 145 to 165 (MLLSYAALLVGSLFSIALLVI), 230 to 250 (VISIGFSFLTIGILSGAVWAN), 264 to 278 (TWAFITWTIYAIYSH), and 291 to 311 (AIVASIGFFIIWICYFGVNLL).

This sequence belongs to the CcmF/CycK/Ccl1/NrfE/CcsA family. May interact with Ccs1.

The protein localises to the plastid. It localises to the chloroplast thylakoid membrane. In terms of biological role, required during biogenesis of c-type cytochromes (cytochrome c6 and cytochrome f) at the step of heme attachment. This chain is Cytochrome c biogenesis protein CcsA, found in Lemna minor (Common duckweed).